A 36-amino-acid chain; its full sequence is Allergen Act d 3 (36 aa).

N-glycosylated.

The sequence is that of Allergen Act d 3 from Actinidia deliciosa (Kiwi).